We begin with the raw amino-acid sequence, 931 residues long: MDYSKTLNLPQTQFPMRGNLPQREPETQKYWQEIDLYKKVQEKNKGKTKFILHDGPPYANGHIHLGHTLNKVLKDIIVKYRSMSGYDAPYVPGWDTHGLPIEQQAIKQLGINRHQVNPVEFRAKCKDYALKWANTQSEEFQRLGVRGDWENPYYTLLPQYEATQIRVFGEMAKKGYIYKGLKPVYWCASCETALAEAEVEYADKTSPSIYVKFPVKDGKGVLPQDAAVVIWTTTPWTLPANVAISVHPEFEYVLAAVQNQKIVVAKELLESFKQAVGAEEAEILATYQGEQLERVVCQHPFIDERESLVILGEHVTLDAGTGAVHTAPGHGEEDFMVGKKYELPVLAPIDNRGRFTSEGGKFQGQFIMDANKTIIEELKERDALMGHVSIKHQYPHCWRCKQPIFFRATEQWFASVDGFRQEALQAIRNVKWVPSWGEDRIYNMVEGRGDWCVSRQRTWGVPIPIFYCNDCGKEIITEETISHIEKLFREHGSDIWFAKEANELVPASLTCPHCGKGKDFRKETDTMDVWFDSGSSHLAVLNQPELWPEQQRPADLYLEGSDQHRGWFNSSLSTSVAVTGKPPYKTVLTHGFTVDEKGRKMSKSLGNVVDPLKICSQMGADILRLWVSSADYRADLALSQNILKQMTESYRKIRNTARFLLGNLYDFDPVKDKVAYDKLPELDRVALMELHKLIKQVLAAYENYEFHIVYHAVHNYCVVDLSAFYLDIIKDRLYTAVPGSLERRAAQTVLYEALDALVRLLTPVLAFTTEEIYKYMPVVGDRLASVQMLDMPEVNVEYMDVELEKKWDKIHEIRKEVLKALEVARKNKVIGNALEAKVDLYVAGDVEEVLKPMAAELTTLFIVSKVNLHGLAAAPADAVKAEELELALQVATAEGGKCERCWMYHEEVGNDAEHATLCPRCATVVKEHHTA.

Residues 1 to 14 are compositionally biased toward polar residues; it reads MDYSKTLNLPQTQF. Residues 1–25 form a disordered region; sequence MDYSKTLNLPQTQFPMRGNLPQREP. Positions 57–67 match the 'HIGH' region motif; sequence PYANGHIHLGH. Glutamate 559 contacts L-isoleucyl-5'-AMP. The short motif at 600–604 is the 'KMSKS' region element; sequence KMSKS. Lysine 603 is an ATP binding site. Positions 898, 901, 918, and 921 each coordinate Zn(2+).

This sequence belongs to the class-I aminoacyl-tRNA synthetase family. IleS type 1 subfamily. In terms of assembly, monomer. Requires Zn(2+) as cofactor.

The protein localises to the cytoplasm. The catalysed reaction is tRNA(Ile) + L-isoleucine + ATP = L-isoleucyl-tRNA(Ile) + AMP + diphosphate. In terms of biological role, catalyzes the attachment of isoleucine to tRNA(Ile). As IleRS can inadvertently accommodate and process structurally similar amino acids such as valine, to avoid such errors it has two additional distinct tRNA(Ile)-dependent editing activities. One activity is designated as 'pretransfer' editing and involves the hydrolysis of activated Val-AMP. The other activity is designated 'posttransfer' editing and involves deacylation of mischarged Val-tRNA(Ile). The chain is Isoleucine--tRNA ligase from Desulforamulus reducens (strain ATCC BAA-1160 / DSM 100696 / MI-1) (Desulfotomaculum reducens).